A 427-amino-acid polypeptide reads, in one-letter code: Serine protease HTRA2, mitochondrial (427 aa).

Residues 33–55 (HTASSSKGSGGDNSKDKENNGQN) are disordered. Residues 66–86 (SAFQFCVPFSLGALVSAVLIE) form a helical membrane-spanning segment. The IAP-binding motif lies at 78–81 (ALVS). Residues 144 to 307 (SNGSGFVIEQ…IPIDYVKVFL (164 aa)) form a serine protease region. Residues histidine 162, aspartate 194, and serine 271 each act as charge relay system in the active site. The PDZ domain occupies 330–415 (MGITMLTLTP…DLEIVILRGV (86 aa)).

Belongs to the peptidase S1C family. Interacts with th/DIAP1 (via BIR 2 domain).

Its subcellular location is the mitochondrion intermembrane space. The protein localises to the mitochondrion membrane. The catalysed reaction is Cleavage of non-polar aliphatic amino-acids at the P1 position, with a preference for Val, Ile and Met. At the P2 and P3 positions, Arg is selected most strongly with a secondary preference for other hydrophilic residues.. In terms of biological role, serine protease that shows proteolytic activity against a non-specific substrate beta-casein. Promotes or induces cell death either by direct binding to and inhibition of BIRC proteins (also called inhibitor of apoptosis proteins, IAPs), leading to an increase in caspase activity, or by a BIRC inhibition-independent, caspase-independent and serine protease activity-dependent mechanism. Can antagonize antiapoptotic activity of th/Diap1 by directly inducing the degradation of th/Diap1. The polypeptide is Serine protease HTRA2, mitochondrial (Drosophila pseudoobscura pseudoobscura (Fruit fly)).